Here is a 295-residue protein sequence, read N- to C-terminus: MTDENIRQIAFYGKGGIGKSTTSQNTLAAMAEMGQRIMIVGCDPKADSTRLMLHSKAQTTVLHLAAERGAVEDLELHEVMLTGFRGVKCVESGGPEPGVGCAGRGIITAINFLEENGAYQDLDFVSYDVLGDVVCGGFAMPIREGKAQEIYIVTSGEMMAMYAANNIARGILKYAHSGGVRLGGLICNSRKVDREDELIMNLAERLNTQMIHFVPRDNIVQHAELRRMTVNEYAPDSNQGQEYRALAKKIINNDKLTIPTPMEMDELEALLIEYGLLDDDTKHSEIIGKPAEATK.

13–20 (GKGGIGKS) contributes to the ATP binding site. C101 is a [4Fe-4S] cluster binding site. R104 is modified (ADP-ribosylarginine; by dinitrogenase reductase ADP-ribosyltransferase). C135 is a [4Fe-4S] cluster binding site.

It belongs to the NifH/BchL/ChlL family. Homodimer. The cofactor is [4Fe-4S] cluster. The reversible ADP-ribosylation of Arg-104 inactivates the nitrogenase reductase and regulates nitrogenase activity.

It catalyses the reaction N2 + 8 reduced [2Fe-2S]-[ferredoxin] + 16 ATP + 16 H2O = H2 + 8 oxidized [2Fe-2S]-[ferredoxin] + 2 NH4(+) + 16 ADP + 16 phosphate + 6 H(+). Its function is as follows. The key enzymatic reactions in nitrogen fixation are catalyzed by the nitrogenase complex, which has 2 components: the iron protein and the molybdenum-iron protein. In Nostoc sp. (strain PCC 7120 / SAG 25.82 / UTEX 2576), this protein is Nitrogenase iron protein 1 (nifH1).